A 107-amino-acid polypeptide reads, in one-letter code: MGMRIKKDDTVKVISGEYKGKIGKVLKTLPKEGKVIIEGVNFTKRHQRPTNQYREGGIIEREAPIYACKVMVVCPNCDKPTRVGHKKLESGEKVRVCKKCGEIIDKV.

It belongs to the universal ribosomal protein uL24 family. Part of the 50S ribosomal subunit.

Its function is as follows. One of two assembly initiator proteins, it binds directly to the 5'-end of the 23S rRNA, where it nucleates assembly of the 50S subunit. One of the proteins that surrounds the polypeptide exit tunnel on the outside of the subunit. The sequence is that of Large ribosomal subunit protein uL24 from Kosmotoga olearia (strain ATCC BAA-1733 / DSM 21960 / TBF 19.5.1).